Consider the following 153-residue polypeptide: Peptidyl-prolyl cis-trans isomerase FKBP15-1 (153 aa).

Positions 1 to 25 (MMSSASAMKAVGFLLLLTILTLAYA) are cleaved as a signal peptide. The region spanning 52–140 (GDKIKVHYRG…IFDTELVAVN (89 aa)) is the PPIase FKBP-type domain. Residues 150–153 (KNEL) carry the Prevents secretion from ER motif.

Belongs to the FKBP-type PPIase family.

The protein localises to the endoplasmic reticulum lumen. It catalyses the reaction [protein]-peptidylproline (omega=180) = [protein]-peptidylproline (omega=0). PPIases accelerate the folding of proteins. It catalyzes the cis-trans isomerization of proline imidic peptide bonds in oligopeptides. This chain is Peptidyl-prolyl cis-trans isomerase FKBP15-1 (FKBP15-1), found in Arabidopsis thaliana (Mouse-ear cress).